Here is an 80-residue protein sequence, read N- to C-terminus: Serine palmitoyltransferase small subunit B (80 aa).

The Cytoplasmic portion of the chain corresponds to 1-11 (MDMKNMREYMS). A helical transmembrane segment spans residues 12 to 29 (WLYYQYLLITGIYVLEPW). Over 30-36 (EQSIFNT) the chain is Lumenal. The chain crosses the membrane as a helical span at residues 37-57 (VLFTMVAMVIYTSYVFVPIHV). The Cytoplasmic portion of the chain corresponds to 58-80 (RLALEFFCELVGGQPESTVALMT).

Belongs to the SPTSS family. SPTSSB subfamily. Component of the serine palmitoyltransferase (SPT) complex, which is composed of SPTLC1, SPTLC2 or SPTLC3 and SPTSSA or SPTSSB. The heterodimer consisting of SPTLC1 and SPTLC2/SPTLC3 forms the catalytic core of the enzyme, while SPTSSA or SPTSSB subunits determine substrate specificity. SPT also interacts with ORMDL proteins, especially ORMDL3, which negatively regulate SPT activity in the presence of ceramides.

The protein resides in the endoplasmic reticulum membrane. It functions in the pathway lipid metabolism; sphingolipid metabolism. Its function is as follows. Component of the serine palmitoyltransferase multisubunit enzyme (SPT) that catalyzes the initial and rate-limiting step in sphingolipid biosynthesis by condensing L-serine and activated acyl-CoA (most commonly palmitoyl-CoA) to form long-chain bases. The SPT complex is composed of SPTLC1, SPTLC2 or SPTLC3 and SPTSSA or SPTSSB. Within this complex, the heterodimer consisting of SPTLC1 and SPTLC2/SPTLC3 forms the catalytic core. Within the SPT complex, SPTSSB stimulates the catalytic activity and plays a role in substrate specificity. SPT complexes with this subunit showing a preference for longer acyl-CoAs. The SPTLC1-SPTLC2-SPTSSB complex shows a strong preference for C18-CoA substrate, while the SPTLC1-SPTLC3-SPTSSB isozyme displays an ability to use a broader range of acyl-CoAs, without apparent preference. The polypeptide is Serine palmitoyltransferase small subunit B (sptssb) (Danio rerio (Zebrafish)).